We begin with the raw amino-acid sequence, 374 residues long: Chaperone protein DnaJ (374 aa).

The 66-residue stretch at 5-70 (DYYEVLGVAK…QKRAAYDRYG (66 aa)) folds into the J domain. Residues 134-212 (GFDTEIRVPS…CDGVGRIRRN (79 aa)) form a CR-type zinc finger. Positions 147, 150, 164, 167, 186, 189, 200, and 203 each coordinate Zn(2+). CXXCXGXG motif repeat units follow at residues 147 to 154 (CDTCHGSG), 164 to 171 (CRTCGGSG), 186 to 193 (CPTCHGTG), and 200 to 207 (CPSCDGVG).

The protein belongs to the DnaJ family. In terms of assembly, homodimer. Zn(2+) serves as cofactor.

It is found in the cytoplasm. Functionally, participates actively in the response to hyperosmotic and heat shock by preventing the aggregation of stress-denatured proteins and by disaggregating proteins, also in an autonomous, DnaK-independent fashion. Unfolded proteins bind initially to DnaJ; upon interaction with the DnaJ-bound protein, DnaK hydrolyzes its bound ATP, resulting in the formation of a stable complex. GrpE releases ADP from DnaK; ATP binding to DnaK triggers the release of the substrate protein, thus completing the reaction cycle. Several rounds of ATP-dependent interactions between DnaJ, DnaK and GrpE are required for fully efficient folding. Also involved, together with DnaK and GrpE, in the DNA replication of plasmids through activation of initiation proteins. In Bordetella petrii (strain ATCC BAA-461 / DSM 12804 / CCUG 43448), this protein is Chaperone protein DnaJ.